The primary structure comprises 441 residues: Phenoloxidase-activating enzyme (441 aa).

Residues 1–21 (MFLIWTFIVAVLAIQTKSVVA) form the signal peptide. The residue at position 22 (Q22) is a Pyrrolidone carboxylic acid. Clip domains are found at residues 23 to 76 (SCRT…AVCC) and 77 to 127 (PCNA…SICC). Intrachain disulfides connect C24–C75, C34–C65, C40–C76, C78–C126, C88–C117, C94–C127, C164–C305, and C203–C219. Positions 174-440 (IVGGAPASID…YLPWIQNTIE (267 aa)) constitute a Peptidase S1 domain. H218 (charge relay system) is an active-site residue. Residues E237, N239, N242, and D246 each contribute to the Ca(2+) site. N239 is a glycosylation site (N-linked (GlcNAc...) asparagine). D285 serves as the catalytic Charge relay system. A glycan (N-linked (GlcNAc...) asparagine) is linked at N334. 2 disulfide bridges follow: C356–C377 and C387–C416. The active-site Charge relay system is S391.

The protein belongs to the peptidase S1 family. CLIP subfamily. In terms of assembly, in the active form, heterodimer of a light chain and a heavy chain; disulfide-linked. Post-translationally, proteolytically cleaved for activation. Cleavage produces a light chain and a catalytic heavy chain which remains covalently associated probably through an interchain disulfide bond. Glycosylated.

Its activity is regulated as follows. Stabilized by calcium. Inhibited by di-isopropyl phosphorofluoridate (DFP), phenylmethanesulfonylfluoride (PMSF), p-nitrophenyl-p'-guanidinobenzonate (p-NPGB), p-chloromercuribenzoate (PCMB), ethylenediaminetetraacetic acid (EDTA), urea and CI-13c. In terms of biological role, endopeptidase with selective post-Arg cleavage site. Activates prophenoloxidase. Has a probable role in the melanization process as part of the innate immune response. This Bombyx mori (Silk moth) protein is Phenoloxidase-activating enzyme.